The sequence spans 1262 residues: Structural maintenance of chromosomes protein 1 (1262 aa).

Residues 171-497 (SRSHEFQAEY…VAVVRQLSEA (327 aa)) adopt a coiled-coil conformation. Residues 524–642 (SVYGRLVDLC…ESQEDAKQLA (119 aa)) enclose the SMC hinge domain. Residues 680–937 (KKWDEKVVKQ…RLESLLTKKQ (258 aa)) adopt a coiled-coil conformation. A disordered region spans residues 965–994 (EYEEDDGDDTASQSSQSATDGPSVSEEQIQ). Positions 974 to 991 (TASQSSQSATDGPSVSEE) are enriched in polar residues. A coiled-coil region spans residues 1017–1086 (DGVRQMSNRL…QQFEKVKTDR (70 aa)). The DA-box motif lies at 1148 to 1183 (LSGGEKTIAALALLFAVHGRNPAPFFVLDEIDAALD).

It belongs to the SMC family. SMC1 subfamily. In terms of assembly, component of the cohesin complex, composed of the smc-1 and smc-3 heterodimer attached via their SMC hinge domain, scc-1 which links them, and scc-3. Interacts with smc-3, scc-1, scc-3 and tim-1.

The protein localises to the nucleus. Its subcellular location is the chromosome. Functionally, involved in chromosome cohesion during cell cycle and in DNA repair. Required for chromosome segregation during mitosis. Central component of cohesin complex. The cohesin complex is required for the cohesion of sister chromatids after DNA replication. The cohesin complex apparently forms a large proteinaceous ring within which sister chromatids can be trapped. At anaphase, the complex is cleaved and dissociates from chromatin, allowing sister chromatids to segregate. This is Structural maintenance of chromosomes protein 1 from Caenorhabditis elegans.